Here is a 348-residue protein sequence, read N- to C-terminus: Pyruvate dehydrogenase E1 component subunit alpha (348 aa).

Positions 1–21 (MAPRKSASVSSRKTAAKPAKK) are disordered.

As to quaternary structure, heterodimer of an alpha and a beta chain. The cofactor is thiamine diphosphate.

The catalysed reaction is N(6)-[(R)-lipoyl]-L-lysyl-[protein] + pyruvate + H(+) = N(6)-[(R)-S(8)-acetyldihydrolipoyl]-L-lysyl-[protein] + CO2. Functionally, the pyruvate dehydrogenase complex catalyzes the overall conversion of pyruvate to acetyl-CoA and CO(2). It contains multiple copies of three enzymatic components: pyruvate dehydrogenase (E1), dihydrolipoamide acetyltransferase (E2) and lipoamide dehydrogenase (E3). The sequence is that of Pyruvate dehydrogenase E1 component subunit alpha (pdhA) from Rhizobium meliloti (strain 1021) (Ensifer meliloti).